Reading from the N-terminus, the 304-residue chain is Haloalkane dehalogenase (304 aa).

In terms of domain architecture, AB hydrolase-1 spans 42–154 (PIVFLHGNPT…DSVDLSPEFV (113 aa)). Catalysis depends on aspartate 114, which acts as the Nucleophile. Glutamate 138 functions as the Proton donor in the catalytic mechanism. The Proton acceptor role is filled by histidine 280.

It belongs to the haloalkane dehalogenase family. Type 2 subfamily. In terms of assembly, monomer.

It catalyses the reaction 1-haloalkane + H2O = a halide anion + a primary alcohol + H(+). In terms of biological role, catalyzes hydrolytic cleavage of carbon-halogen bonds in halogenated aliphatic compounds, leading to the formation of the corresponding primary alcohols, halide ions and protons. This chain is Haloalkane dehalogenase, found in Agrobacterium fabrum (strain C58 / ATCC 33970) (Agrobacterium tumefaciens (strain C58)).